Here is a 175-residue protein sequence, read N- to C-terminus: RNA pyrophosphohydrolase (175 aa).

In terms of domain architecture, Nudix hydrolase spans 7 to 150; the sequence is GYRLNVGIIL…KRQVYIQALK (144 aa). The short motif at 39–60 is the Nudix box element; the sequence is GGLAPGETAMQAMYRELHEEVG.

It belongs to the Nudix hydrolase family. RppH subfamily. A divalent metal cation is required as a cofactor.

Accelerates the degradation of transcripts by removing pyrophosphate from the 5'-end of triphosphorylated RNA, leading to a more labile monophosphorylated state that can stimulate subsequent ribonuclease cleavage. The polypeptide is RNA pyrophosphohydrolase (Legionella pneumophila (strain Paris)).